A 557-amino-acid chain; its full sequence is Probable protein kinase UbiB (557 aa).

The Protein kinase domain maps to 121-509 (AFDTTPLASA…RKLQTRVVTA (389 aa)). ATP is bound by residues 127-135 (LASASIAQV) and Lys154. Asp289 acts as the Proton acceptor in catalysis. 2 helical membrane-spanning segments follow: residues 506-526 (VVTAITGSGLLVVAAVLYGLH) and 535-555 (VPVWSWISGGAGSAALLIAWL).

The protein belongs to the ABC1 family. UbiB subfamily.

The protein localises to the cell inner membrane. Its pathway is cofactor biosynthesis; ubiquinone biosynthesis [regulation]. Functionally, is probably a protein kinase regulator of UbiI activity which is involved in aerobic coenzyme Q (ubiquinone) biosynthesis. This chain is Probable protein kinase UbiB, found in Xanthomonas campestris pv. campestris (strain 8004).